The primary structure comprises 238 residues: Deoxyribose-phosphate aldolase (238 aa).

Asp-104 (proton donor/acceptor) is an active-site residue. Lys-168 acts as the Schiff-base intermediate with acetaldehyde in catalysis. Catalysis depends on Lys-197, which acts as the Proton donor/acceptor.

Belongs to the DeoC/FbaB aldolase family. DeoC type 1 subfamily.

Its subcellular location is the cytoplasm. It carries out the reaction 2-deoxy-D-ribose 5-phosphate = D-glyceraldehyde 3-phosphate + acetaldehyde. The protein operates within carbohydrate degradation; 2-deoxy-D-ribose 1-phosphate degradation; D-glyceraldehyde 3-phosphate and acetaldehyde from 2-deoxy-alpha-D-ribose 1-phosphate: step 2/2. Catalyzes a reversible aldol reaction between acetaldehyde and D-glyceraldehyde 3-phosphate to generate 2-deoxy-D-ribose 5-phosphate. In Bacteroides thetaiotaomicron (strain ATCC 29148 / DSM 2079 / JCM 5827 / CCUG 10774 / NCTC 10582 / VPI-5482 / E50), this protein is Deoxyribose-phosphate aldolase.